Reading from the N-terminus, the 358-residue chain is Purine permease 2 (358 aa).

A run of 10 helical transmembrane segments spans residues 6–26, 37–57, 74–94, 110–130, 134–154, 170–190, 209–229, 262–282, 288–308, and 312–332; these read VLVIINCIFLAIGNCGGPLMM, IWFPSFLQTVGCPLIFFPLLL, FFLMKPPLFIAAIVVGLLVGF, TASLIISAQLGFTALFAFFMV, FTPFTINAIVLLTGGAVVLAL, VVGFIMTLGAALLYGFILPLV, FQMVLCFAATCVCLVGMLAAG, VIVFTAIIWQAFFVGAIGLIF, VSGIMVSALLPVTVILAVICF, and FQAGKGVALALSLWGSVSYFY. One can recognise an EamA domain in the interval 46–154; the sequence is VGCPLIFFPL…LTGGAVVLAL (109 aa).

The protein belongs to the purine permeases (TC 2.A.7.14) family. In terms of tissue distribution, expressed in the vascular system of leaves. Restricted to the phloem. Expressed in flowers and roots and not detected in stems.

The protein localises to the membrane. With respect to regulation, competitive inhibition of adenine transport by isopentenyladenine, kinetin, benzylaminopurine, trans- and cis-zeatin and trans-zeatin riboside. Its function is as follows. Mediates adenine transport. May be involved in the uptake of cytokinin analogs. This chain is Purine permease 2 (PUP2), found in Arabidopsis thaliana (Mouse-ear cress).